Consider the following 90-residue polypeptide: Small ribosomal subunit protein uS15c (90 aa).

The protein belongs to the universal ribosomal protein uS15 family. In terms of assembly, part of the 30S ribosomal subunit.

It localises to the plastid. The protein localises to the chloroplast. The chain is Small ribosomal subunit protein uS15c (rps15) from Daucus carota (Wild carrot).